The chain runs to 122 residues: Large ribosomal subunit protein uL14c (122 aa).

The protein belongs to the universal ribosomal protein uL14 family. In terms of assembly, part of the 50S ribosomal subunit.

The protein resides in the plastid. The protein localises to the chloroplast. In terms of biological role, binds to 23S rRNA. This Porphyra purpurea (Red seaweed) protein is Large ribosomal subunit protein uL14c.